Here is a 601-residue protein sequence, read N- to C-terminus: Elongation factor 4 (601 aa).

One can recognise a tr-type G domain in the interval 6-188; it reads AHIRNFSIIA…QIVRKVPPPK (183 aa). GTP contacts are provided by residues 18–23 and 135–138; these read DHGKST and NKVD.

The protein belongs to the TRAFAC class translation factor GTPase superfamily. Classic translation factor GTPase family. LepA subfamily.

It localises to the cell inner membrane. The catalysed reaction is GTP + H2O = GDP + phosphate + H(+). Its function is as follows. Required for accurate and efficient protein synthesis under certain stress conditions. May act as a fidelity factor of the translation reaction, by catalyzing a one-codon backward translocation of tRNAs on improperly translocated ribosomes. Back-translocation proceeds from a post-translocation (POST) complex to a pre-translocation (PRE) complex, thus giving elongation factor G a second chance to translocate the tRNAs correctly. Binds to ribosomes in a GTP-dependent manner. In Anaeromyxobacter sp. (strain Fw109-5), this protein is Elongation factor 4.